Consider the following 68-residue polypeptide: Large ribosomal subunit protein eL24 (68 aa).

4 residues coordinate Zn(2+): cysteine 7, cysteine 10, cysteine 33, and cysteine 37. The C4-type zinc finger occupies 7–37 (CSYCGREFEPGTGKMFVRNDGRVLFFCSSKC).

Belongs to the eukaryotic ribosomal protein eL24 family. As to quaternary structure, part of the 50S ribosomal subunit. Forms a cluster with proteins L3 and L14. It depends on Zn(2+) as a cofactor.

In terms of biological role, binds to the 23S rRNA. This is Large ribosomal subunit protein eL24 from Thermococcus gammatolerans (strain DSM 15229 / JCM 11827 / EJ3).